A 594-amino-acid chain; its full sequence is uncharacterized protein (594 aa).

The zn(2)-C6 fungal-type DNA-binding region spans 11–38 (CELCRRKKIRCNRELPSCQNCIVYQEEC). Residues 503-523 (YLWVFLYCPFTPFLVLFSNIV) form a helical membrane-spanning segment.

The protein resides in the nucleus. It is found in the membrane. This is an uncharacterized protein from Schizosaccharomyces pombe (strain 972 / ATCC 24843) (Fission yeast).